The chain runs to 524 residues: Casein kinase I homolog 3 (524 aa).

A Protein kinase domain is found at 14–319; it reads YAVGPKIGEG…YLISLMDDAL (306 aa). ATP is bound by residues 20–28 and Lys-60; that span reads IGEGSFGVI. Residue Asp-150 is the Proton acceptor of the active site. Disordered regions lie at residues 352 to 414 and 427 to 474; these read HGYG…KQQH and PETH…EHNL. Positions 360–373 are enriched in low complexity; the sequence is RVNGNTARNNVNTN. Composition is skewed to polar residues over residues 374-413 and 429-474; these read SKTRNTTPVATPKQQAQNSYNKDNSKSRISSNPQSFTKQQ and THSN…EHNL. The YXXZ targeting signal motif lies at 444-447; sequence YDSI. 7 S-palmitoyl cysteine lipidation sites follow: Cys-517, Cys-518, Cys-519, Cys-520, Cys-522, Cys-523, and Cys-524.

The protein belongs to the protein kinase superfamily. CK1 Ser/Thr protein kinase family. Casein kinase I subfamily.

The protein localises to the cell membrane. The protein resides in the nucleus membrane. Its subcellular location is the vacuole membrane. It carries out the reaction L-seryl-[protein] + ATP = O-phospho-L-seryl-[protein] + ADP + H(+). The catalysed reaction is L-threonyl-[protein] + ATP = O-phospho-L-threonyl-[protein] + ADP + H(+). In terms of biological role, casein kinases are operationally defined by their preferential utilization of acidic proteins such as caseins as substrates. Phosphorylates MON1, inhibiting the guanine nucleotide exchange factor activity of the MON1-CCZ1 complex, possibly by preventing its recruitment to membranes by small GTPase RAB5 homologs. This Saccharomyces cerevisiae (strain ATCC 204508 / S288c) (Baker's yeast) protein is Casein kinase I homolog 3 (YCK3).